Reading from the N-terminus, the 1153-residue chain is uncharacterized protein (1153 aa).

Disordered stretches follow at residues T164–D193, D224–K245, K294–H316, E332–K427, L613–N648, Q683–S703, K717–K740, N772–E819, A838–K874, and N942–V1106. The segment covering L169–Q179 has biased composition (pro residues). Low complexity-rich tracts occupy residues N231–N240, K298–K312, Q336–K391, and N399–N423. The segment covering L613–Q625 has biased composition (polar residues). Residues Q687–D699 show a composition bias toward basic and acidic residues. Over residues N721–N734 the composition is skewed to low complexity. The span at N772–T784 shows a compositional bias: basic and acidic residues. 2 stretches are compositionally biased toward low complexity: residues T788–N808 and S839–S854. Residues T856 to K874 show a composition bias toward basic and acidic residues. Residues N942 to N987 show a composition bias toward low complexity. Polar residues-rich tracts occupy residues P988–T998 and Q1005–P1015. Over residues I1019–S1059 the composition is skewed to low complexity. Residues D1064 to K1081 show a composition bias toward basic and acidic residues. Residues N1082–E1105 are compositionally biased toward low complexity.

This is an uncharacterized protein from Dictyostelium discoideum (Social amoeba).